A 498-amino-acid chain; its full sequence is MANKESKNVVIIGAGVLSTTFGSMIKELEPDWNIKLYERLDRPGIESSNERNNAGTGHAALCELNYTVQQPDGSIDIEKAKEINEQFEISKQFWGHLVKSGNISNPRDFINPLPHISFVRGKNNVKFLKNRYEAMRNFPMFDNIEYTEDIEEMRKWMPLMMTGRTGNEIMAASKIDEGTDVNYGELTRKMAKSIEKHPNADVQYNHEVINFNRRKDGIWEVKVKNRNSGDVETVLADYVFIGAGGGAIPLLQKTGIPESKHLGGFPISGQFLICTNPDVINEHDVKVYGKEPPGTPPMTVPHLDTRYIDGERTLLFGPFANIGPKFLRNGSNLDLFKSVKPYNITTLLASAVKNLPLIKYSIDQVLMTKEGCMNHLRTFYPEARDEDWQLYTAGKRVQVIKDTKEHGKGFIQFGTEVVNSKDHSVIALLGESPGASTSVSVALEVLEKNFAEYEKDWTPKLQKMIPSYGKSLIDDVKLMRATRKQTSKDLELNYYESK.

The protein belongs to the MQO family. FAD is required as a cofactor.

It carries out the reaction (S)-malate + a quinone = a quinol + oxaloacetate. It participates in carbohydrate metabolism; tricarboxylic acid cycle; oxaloacetate from (S)-malate (quinone route): step 1/1. In Staphylococcus epidermidis (strain ATCC 35984 / DSM 28319 / BCRC 17069 / CCUG 31568 / BM 3577 / RP62A), this protein is Probable malate:quinone oxidoreductase 2.